A 188-amino-acid polypeptide reads, in one-letter code: Translocon-associated protein subunit beta (188 aa).

The N-terminal stretch at 1-15 (MKFSLFALLFVVVSC) is a signal peptide. The Lumenal portion of the chain corresponds to 16–151 (VDVGTQTRDA…EYDRRFAPKY (136 aa)). N-linked (GlcNAc...) asparagine glycosylation is found at Asn93 and Asn109. The helical transmembrane segment at 152 to 172 (TYFLVFFLIVAPTTLGSFLLF) threads the bilayer. The Cytoplasmic portion of the chain corresponds to 173-188 (QQSKARFPNVIKKKST).

Belongs to the TRAP-beta family. As to quaternary structure, heterotetramer of TRAP-alpha, TRAP-beta, TRAP-delta and TRAP-gamma.

It localises to the endoplasmic reticulum membrane. Functionally, TRAP proteins are part of a complex whose function is to bind calcium to the ER membrane and thereby regulate the retention of ER resident proteins. The sequence is that of Translocon-associated protein subunit beta from Caenorhabditis elegans.